Here is a 331-residue protein sequence, read N- to C-terminus: tRNA U34 carboxymethyltransferase (331 aa).

Carboxy-S-adenosyl-L-methionine contacts are provided by residues Lys91, Trp105, Lys110, Gly130, 152–154 (DPS), 181–182 (IE), Met196, Tyr200, and Arg315.

Belongs to the class I-like SAM-binding methyltransferase superfamily. CmoB family. In terms of assembly, homotetramer.

It catalyses the reaction carboxy-S-adenosyl-L-methionine + 5-hydroxyuridine(34) in tRNA = 5-carboxymethoxyuridine(34) in tRNA + S-adenosyl-L-homocysteine + H(+). Functionally, catalyzes carboxymethyl transfer from carboxy-S-adenosyl-L-methionine (Cx-SAM) to 5-hydroxyuridine (ho5U) to form 5-carboxymethoxyuridine (cmo5U) at position 34 in tRNAs. The protein is tRNA U34 carboxymethyltransferase of Shewanella baltica (strain OS155 / ATCC BAA-1091).